The sequence spans 157 residues: Transmembrane protein 50A (157 aa).

Serine 2 is subject to N-acetylserine. Position 2 is a phosphoserine (serine 2). 4 consecutive transmembrane segments (helical) span residues isoleucine 26–tyrosine 46, threonine 58–valine 78, isoleucine 95–leucine 115, and valine 126–valine 146.

It belongs to the UPF0220 family.

Its subcellular location is the membrane. This chain is Transmembrane protein 50A (Tmem50a), found in Mus musculus (Mouse).